A 735-amino-acid polypeptide reads, in one-letter code: Photosystem I P700 chlorophyll a apoprotein A2 (735 aa).

The next 8 membrane-spanning stretches (helical) occupy residues 47-70 (IFAS…FHVA), 136-159 (LYNG…LHLQ), 176-200 (LNHH…HVAI), 274-292 (MAHH…GHMY), 331-354 (LHFQ…QHMY), 370-396 (AALY…IFFI), 418-440 (AIIS…LYVH), and 518-536 (FLVH…LILV). Cys560 and Cys569 together coordinate [4Fe-4S] cluster. A run of 2 helical transmembrane segments spans residues 576-597 (AFYL…YWHW) and 644-666 (LSVW…MFLI). Chlorophyll a is bound by residues His655, Met663, and Tyr671. Trp672 provides a ligand contact to phylloquinone. The helical transmembrane segment at 708-728 (LVGLVHFSVGYIFTYAAFLIA) threads the bilayer.

It belongs to the PsaA/PsaB family. The PsaA/B heterodimer binds the P700 chlorophyll special pair and subsequent electron acceptors. PSI consists of a core antenna complex that captures photons, and an electron transfer chain that converts photonic excitation into a charge separation. The eukaryotic PSI reaction center is composed of at least 11 subunits. Requires P700 is a chlorophyll a/chlorophyll a' dimer, A0 is one or more chlorophyll a, A1 is one or both phylloquinones and FX is a shared 4Fe-4S iron-sulfur center. as cofactor.

It localises to the plastid. It is found in the chloroplast thylakoid membrane. The catalysed reaction is reduced [plastocyanin] + hnu + oxidized [2Fe-2S]-[ferredoxin] = oxidized [plastocyanin] + reduced [2Fe-2S]-[ferredoxin]. Functionally, psaA and PsaB bind P700, the primary electron donor of photosystem I (PSI), as well as the electron acceptors A0, A1 and FX. PSI is a plastocyanin/cytochrome c6-ferredoxin oxidoreductase, converting photonic excitation into a charge separation, which transfers an electron from the donor P700 chlorophyll pair to the spectroscopically characterized acceptors A0, A1, FX, FA and FB in turn. Oxidized P700 is reduced on the lumenal side of the thylakoid membrane by plastocyanin or cytochrome c6. The sequence is that of Photosystem I P700 chlorophyll a apoprotein A2 from Stigeoclonium helveticum (Green alga).